A 760-amino-acid chain; its full sequence is Phosphatidylinositol N-acetylglucosaminyltransferase subunit Q (760 aa).

Helical transmembrane passes span 278–298 (TVAS…WLHG), 349–371 (LYHI…HILW), 378–400 (CLGL…FHIY), 446–468 (LFIG…LYYL), and 475–497 (LLVV…LPLY). Residues 696-748 (LAVGVEGPCQDEPPSPRHPLAPSAEQHPASGGLKQSLTPVPSGPGPSLPEPHG) form a disordered region.

This sequence belongs to the PIGQ family. In terms of assembly, component of the glycosylphosphatidylinositol-N-acetylglucosaminyltransferase (GPI-GnT) complex composed at least by PIGA, PIGC, PIGH, PIGP, PIGQ, PIGY and DPM2. Interacts with PIGA, PIGH and PIGC.

It is found in the membrane. The protein operates within glycolipid biosynthesis; glycosylphosphatidylinositol-anchor biosynthesis. Functionally, part of the glycosylphosphatidylinositol-N-acetylglucosaminyltransferase (GPI-GnT) complex that catalyzes the transfer of N-acetylglucosamine from UDP-N-acetylglucosamine to phosphatidylinositol and participates in the first step of GPI biosynthesis. The sequence is that of Phosphatidylinositol N-acetylglucosaminyltransferase subunit Q from Homo sapiens (Human).